The chain runs to 113 residues: MNTVRGTFLLVFGLAASLGQADKNENRREMQKKTEQGKSYLNFAENLLLQKLEELEAKLLEKHSKKSKNSRQKRCIGKDVPCDENDPRCCSGLICLTPTLHGIWYKSYYCYKK.

An N-terminal signal peptide occupies residues 1-21 (MNTVRGTFLLVFGLAASLGQA). A propeptide spanning residues 22–74 (DKNENRREMQKKTEQGKSYLNFAENLLLQKLEELEAKLLEKHSKKSKNSRQKR) is cleaved from the precursor. Intrachain disulfides connect Cys-75–Cys-90, Cys-82–Cys-95, and Cys-89–Cys-110.

This sequence belongs to the neurotoxin 14 (magi-1) family. 01 (HNTX-16) subfamily. In terms of tissue distribution, expressed by the venom gland.

It is found in the secreted. Probable ion channel inhibitor. This Cyriopagopus hainanus (Chinese bird spider) protein is U11-theraphotoxin-Hhn1m.